The primary structure comprises 314 residues: tRNA pseudouridine synthase B (314 aa).

The active-site Nucleophile is D41.

This sequence belongs to the pseudouridine synthase TruB family. Type 1 subfamily.

It carries out the reaction uridine(55) in tRNA = pseudouridine(55) in tRNA. Its function is as follows. Responsible for synthesis of pseudouridine from uracil-55 in the psi GC loop of transfer RNAs. The polypeptide is tRNA pseudouridine synthase B (Prochlorococcus marinus (strain NATL1A)).